A 113-amino-acid chain; its full sequence is Class I hydrophobin 1 (113 aa).

The N-terminal stretch at 1–17 (MQFKFLSTVALATLAVA) is a signal peptide. Cystine bridges form between C32–C92, C39–C86, C40–C73, and C93–C106.

Belongs to the fungal hydrophobin family. As to quaternary structure, self-assembles to form functional amyloid fibrils called rodlets. Self-assembly into fibrillar rodlets occurs spontaneously at hydrophobic:hydrophilic interfaces and the rodlets further associate laterally to form amphipathic monolayers.

The protein resides in the secreted. It localises to the cell wall. In terms of biological role, aerial growth, conidiation, and dispersal of filamentous fungi in the environment rely upon a capability of their secreting small amphipathic proteins called hydrophobins (HPBs) with low sequence identity. Class I can self-assemble into an outermost layer of rodlet bundles on aerial cell surfaces, conferring cellular hydrophobicity that supports fungal growth, development and dispersal; whereas Class II form highly ordered films at water-air interfaces through intermolecular interactions but contribute nothing to the rodlet structure. CoH1 is an asexual monokaryon-specific class I hydrophobin that is involved in aerial growth of mycelia. The chain is Class I hydrophobin 1 from Coprinopsis cinerea (Inky cap fungus).